The sequence spans 273 residues: Probable glycerophosphodiester phosphodiesterase GpdQ (273 aa).

Residues D8, H10, D50, N80, H154, H194, and H196 each contribute to the Fe cation site.

This sequence belongs to the cyclic nucleotide phosphodiesterase class-III family. The cofactor is Fe(2+).

The catalysed reaction is a sn-glycero-3-phosphodiester + H2O = an alcohol + sn-glycerol 3-phosphate + H(+). The enzyme catalyses sn-glycero-3-phosphoethanolamine + H2O = ethanolamine + sn-glycerol 3-phosphate + H(+). Catalyzes the hydrolysis of the 3'-5' phosphodiester bond of glycerophosphodiesters such as glycerophosphorylethanolamine (GPE), a typical phospholipid metabolite. The protein is Probable glycerophosphodiester phosphodiesterase GpdQ of Arcobacter nitrofigilis (strain ATCC 33309 / DSM 7299 / CCUG 15893 / LMG 7604 / NCTC 12251 / CI) (Campylobacter nitrofigilis).